A 901-amino-acid polypeptide reads, in one-letter code: MAANFKEQSKKHFDLNGQSYTYYDLKAVEEQGITKVSNLPYSIRVLLESLLRQEDDFVITDDHIKALSQFGKDGNEGEVPFKPSRVILQDFTGVPAVVDLASLRKAMDDVGGDITKINPEVPVDLVIDHSVQVDSYANPEALERNMKLEFERNYERYQFLNWATKAFDNYNAVPPATGIVHQVNLEYLASVVHVRDVDGEKTAFPDTLVGTDSHTTMINGIGVLGWGVGGIEAEAGMLGQPSYFPIPEVIGVRLVNSLPQGATATDLALRVTQELRKKGVVGKFVEFFGPGVQHLPLADRATIANMAPEYGATCGFFPVDDESLKYMKLTGRSDEHIALVKEYLKQNHMFFDVEKEDPNYTDVIELDLSTVEASLSGPKRPQDLIFLSDMKSSFENSVTAPAGNQGHGLDKSEFDKKAEINFKDGSKATMKTGDIAIAAITSCTNTSNPYVMLGAGLVAKKAVEKGLKVPEYVKTSLAPGSKVVTGYLRDAGLQPYLDDLGFNLVGYGCTTCIGNSGPLLPEIEKAIADEDLLVTSVLSGNRNFEGRIHPLVKANYLASPQLVVAYALAGTVDIDLQNEPIGKGNDGEDVYLKDIWPSIKEVSDTVDSVVTPELFIEEYNNVYNNNELWNEIDVTDQPLYDFDPNSTYIQNPSFFQGLSKEPGTIVPLNGLRVMGKFGDSVTTDHISPAGAIGKDTPAGKYLQDHQVPIREFNSYGSRRGNHEVMVRGTFANIRIKNQLAPGTEGGFTTYWPTNEVMPIFDAAMKYKEDGTGLVVLAGNDYGMGSSRDWAAKGTNLLGVKTVIAQSYERIHRSNLVMMGVLPLEFKKGESADSLGLDGTEEISVNIDENVQPHDYVKVTAKKQDGDLVEFDAMVRFDSLVEMDYYRHGGILQMVLRNKLAQ.

Cysteine 443, cysteine 509, and cysteine 512 together coordinate [4Fe-4S] cluster.

It belongs to the aconitase/IPM isomerase family. As to quaternary structure, monomer. The cofactor is [4Fe-4S] cluster.

The catalysed reaction is citrate = D-threo-isocitrate. It carries out the reaction (2S,3R)-3-hydroxybutane-1,2,3-tricarboxylate = 2-methyl-cis-aconitate + H2O. The protein operates within carbohydrate metabolism; tricarboxylic acid cycle; isocitrate from oxaloacetate: step 2/2. It participates in organic acid metabolism; propanoate degradation. In terms of biological role, involved in the catabolism of short chain fatty acids (SCFA) via the tricarboxylic acid (TCA)(acetyl degradation route) and probably the 2-methylcitrate cycle I (propionate degradation route). Catalyzes the reversible isomerization of citrate to isocitrate via cis-aconitate. Could catalyze the hydration of 2-methyl-cis-aconitate to yield (2R,3S)-2-methylisocitrate. The apo form of AcnA functions as a RNA-binding regulatory protein. The protein is Aconitate hydratase A (acnA) of Staphylococcus aureus (strain COL).